A 330-amino-acid polypeptide reads, in one-letter code: tRNA-modifying protein YgfZ (330 aa).

2 residues coordinate folate: W28 and W192.

The protein belongs to the tRNA-modifying YgfZ family.

The protein localises to the cytoplasm. Functionally, folate-binding protein involved in regulating the level of ATP-DnaA and in the modification of some tRNAs. It is probably a key factor in regulatory networks that act via tRNA modification, such as initiation of chromosomal replication. This Blochmanniella pennsylvanica (strain BPEN) protein is tRNA-modifying protein YgfZ.